The following is a 407-amino-acid chain: 1-deoxy-D-xylulose 5-phosphate reductoisomerase (407 aa).

Residues T25, G26, S27, I28, N53, and N136 each contribute to the NADPH site. A 1-deoxy-D-xylulose 5-phosphate-binding site is contributed by K137. Residue E138 coordinates NADPH. D162 contacts Mn(2+). 1-deoxy-D-xylulose 5-phosphate-binding residues include S163, E164, S188, and H211. Residue E164 participates in Mn(2+) binding. G217 contacts NADPH. 1-deoxy-D-xylulose 5-phosphate is bound by residues S224, N229, K230, and E233. Mn(2+) is bound at residue E233.

Belongs to the DXR family. Requires Mg(2+) as cofactor. It depends on Mn(2+) as a cofactor.

The catalysed reaction is 2-C-methyl-D-erythritol 4-phosphate + NADP(+) = 1-deoxy-D-xylulose 5-phosphate + NADPH + H(+). It participates in isoprenoid biosynthesis; isopentenyl diphosphate biosynthesis via DXP pathway; isopentenyl diphosphate from 1-deoxy-D-xylulose 5-phosphate: step 1/6. Functionally, catalyzes the NADPH-dependent rearrangement and reduction of 1-deoxy-D-xylulose-5-phosphate (DXP) to 2-C-methyl-D-erythritol 4-phosphate (MEP). This is 1-deoxy-D-xylulose 5-phosphate reductoisomerase from Rhodopseudomonas palustris (strain BisB18).